We begin with the raw amino-acid sequence, 130 residues long: Small ribosomal subunit protein uS8 (130 aa).

Belongs to the universal ribosomal protein uS8 family. In terms of assembly, part of the 30S ribosomal subunit. Contacts proteins S5 and S12.

One of the primary rRNA binding proteins, it binds directly to 16S rRNA central domain where it helps coordinate assembly of the platform of the 30S subunit. This is Small ribosomal subunit protein uS8 from Shewanella halifaxensis (strain HAW-EB4).